We begin with the raw amino-acid sequence, 189 residues long: Putative manganese efflux pump MntP (189 aa).

6 helical membrane-spanning segments follow: residues 3–23 (PISLLFLALAMSTDAFAAALG), 41–61 (LIFGAIETITPVIGWGIGQVA), 69–89 (DHWIAFTLLLVLGLHMIYNGI), 105–125 (FWILAVTAFATSIDALAVGVG), 133–153 (IVIAALAIGLATTVMVTIGVM), and 168–188 (IVGGIVLIIVGATILYEHLSA).

This sequence belongs to the MntP (TC 9.B.29) family.

The protein resides in the cell inner membrane. Probably functions as a manganese efflux pump. In Pseudomonas savastanoi pv. phaseolicola (strain 1448A / Race 6) (Pseudomonas syringae pv. phaseolicola (strain 1448A / Race 6)), this protein is Putative manganese efflux pump MntP.